A 323-amino-acid polypeptide reads, in one-letter code: Dolichyl-phosphate beta-glucosyltransferase ALG5A (323 aa).

At Met-1 to Arg-5 the chain is on the lumenal side. The chain crosses the membrane as a helical span at residues Phe-6–Ile-26. The Cytoplasmic portion of the chain corresponds to Ala-27–His-323.

It belongs to the glycosyltransferase 2 family.

It localises to the endoplasmic reticulum membrane. The enzyme catalyses a di-trans,poly-cis-dolichyl phosphate + UDP-alpha-D-glucose = a di-trans,poly-cis-dolichyl beta-D-glucosyl phosphate + UDP. The protein operates within protein modification; protein glycosylation. Dolichyl-phosphate beta-glucosyltransferase involved in the glycosylation of glycoproteins through the synthesis of dolichyl beta-D-glucosyl phosphate which serves as a sugar donor for transfer of three glucose residues to the Man-9-GlcNAc-2-PP-dolichol precursor to N-glycans. The chain is Dolichyl-phosphate beta-glucosyltransferase ALG5A from Trichomonas vaginalis (strain ATCC PRA-98 / G3).